The chain runs to 82 residues: Small ribosomal subunit protein uS17c (82 aa).

Belongs to the universal ribosomal protein uS17 family. In terms of assembly, part of the 30S ribosomal subunit.

It is found in the plastid. Its subcellular location is the chloroplast. Functionally, one of the primary rRNA binding proteins, it binds specifically to the 5'-end of 16S ribosomal RNA. This Emiliania huxleyi (Coccolithophore) protein is Small ribosomal subunit protein uS17c (rps17).